Here is an 80-residue protein sequence, read N- to C-terminus: Antitoxin VapB15 (80 aa).

Residues 60 to 80 (DFSNDEIESFSDTDRKLADES) form a disordered region. Glu67 serves as a coordination point for Mg(2+). A Mn(2+)-binding site is contributed by Glu67. Basic and acidic residues predominate over residues 71–80 (DTDRKLADES).

In terms of assembly, forms a VapB15-VapC15(2) heterotrimer and a VapB15(2)-VapC15(2) heterotetramer; each toxin pair forms a homodimer which creates a channel in which the antitoxin binds. The cofactor is Mg(2+). Requires Mn(2+) as cofactor.

Functionally, antitoxin component of a type II toxin-antitoxin (TA) system. Neutralizes the toxic effect of cognate toxin VapC15. In Mycobacterium tuberculosis (strain CDC 1551 / Oshkosh), this protein is Antitoxin VapB15 (vapB15).